A 255-amino-acid chain; its full sequence is MRHPLVMGNWKLNGNKQMVNELIAGLRTELSGVDGCGVAIAPPVMYLEQAKHAISGSPVALGAQNVDVNLSGAFTGEVSADMLKDIGAQYIIIGHSERRTWHAESDDAIAKKFAVLKQTGLIPVLCIGETEAENEAGKTEEVCARQIDAVLNTQGADAFKGVVIAYEPVWAIGTGKSATPAQAQAVHKFIRDHIAKKDATVAAQVIIQYGGSVNDKNAAELFAQPDIDGALVGGASLKADAFAAIVKAAAAAKKA.

9–11 (NWK) is a binding site for substrate. His-95 acts as the Electrophile in catalysis. The active-site Proton acceptor is the Glu-167. Substrate contacts are provided by residues Gly-173, Ser-212, and 233–234 (GG).

This sequence belongs to the triosephosphate isomerase family. Homodimer.

It is found in the cytoplasm. The catalysed reaction is D-glyceraldehyde 3-phosphate = dihydroxyacetone phosphate. It functions in the pathway carbohydrate biosynthesis; gluconeogenesis. It participates in carbohydrate degradation; glycolysis; D-glyceraldehyde 3-phosphate from glycerone phosphate: step 1/1. Involved in the gluconeogenesis. Catalyzes stereospecifically the conversion of dihydroxyacetone phosphate (DHAP) to D-glyceraldehyde-3-phosphate (G3P). This is Triosephosphate isomerase from Erwinia tasmaniensis (strain DSM 17950 / CFBP 7177 / CIP 109463 / NCPPB 4357 / Et1/99).